We begin with the raw amino-acid sequence, 125 residues long: Small ribosomal subunit protein uS13 (125 aa).

The segment at 92–125 is disordered; the sequence is RRSLPVRGQRTQTNARTRKGKRKTVAGKKKATKK. Residues 107–125 are compositionally biased toward basic residues; the sequence is RTRKGKRKTVAGKKKATKK.

The protein belongs to the universal ribosomal protein uS13 family. As to quaternary structure, part of the 30S ribosomal subunit. Forms a loose heterodimer with protein S19. Forms two bridges to the 50S subunit in the 70S ribosome.

Functionally, located at the top of the head of the 30S subunit, it contacts several helices of the 16S rRNA. In the 70S ribosome it contacts the 23S rRNA (bridge B1a) and protein L5 of the 50S subunit (bridge B1b), connecting the 2 subunits; these bridges are implicated in subunit movement. Contacts the tRNAs in the A and P-sites. This chain is Small ribosomal subunit protein uS13, found in Chlorobium phaeobacteroides (strain DSM 266 / SMG 266 / 2430).